A 149-amino-acid polypeptide reads, in one-letter code: Transcription antitermination protein NusB (149 aa).

Belongs to the NusB family.

In terms of biological role, involved in transcription antitermination. Required for transcription of ribosomal RNA (rRNA) genes. Binds specifically to the boxA antiterminator sequence of the ribosomal RNA (rrn) operons. The polypeptide is Transcription antitermination protein NusB (Acinetobacter baumannii (strain AB307-0294)).